Consider the following 392-residue polypeptide: S-adenosylmethionine synthase (392 aa).

H22 provides a ligand contact to ATP. D24 contacts Mg(2+). E50 contacts K(+). L-methionine-binding residues include E63 and Q106. The interval 106–116 (QSPDITQGVTL) is flexible loop. Residues 170–172 (DGK), 236–237 (KF), D245, 251–252 (RK), A268, and K272 each bind ATP. D245 contacts L-methionine. Position 276 (K276) interacts with L-methionine.

This sequence belongs to the AdoMet synthase family. In terms of assembly, homotetramer; dimer of dimers. Requires Mg(2+) as cofactor. K(+) serves as cofactor.

The protein localises to the cytoplasm. It carries out the reaction L-methionine + ATP + H2O = S-adenosyl-L-methionine + phosphate + diphosphate. It functions in the pathway amino-acid biosynthesis; S-adenosyl-L-methionine biosynthesis; S-adenosyl-L-methionine from L-methionine: step 1/1. Catalyzes the formation of S-adenosylmethionine (AdoMet) from methionine and ATP. The overall synthetic reaction is composed of two sequential steps, AdoMet formation and the subsequent tripolyphosphate hydrolysis which occurs prior to release of AdoMet from the enzyme. The sequence is that of S-adenosylmethionine synthase from Sulfurimonas denitrificans (strain ATCC 33889 / DSM 1251) (Thiomicrospira denitrificans (strain ATCC 33889 / DSM 1251)).